We begin with the raw amino-acid sequence, 740 residues long: Vacuolar protein sorting-associated protein 51 homolog (740 aa).

Coiled coils occupy residues 65–87 and 322–344; these read SATD…VNLL and RALD…LEVQ.

Belongs to the VPS51 family. Component of the Golgi-associated retrograde protein (GARP) complex.

Its function is as follows. May act as a component of the GARP complex that is involved in retrograde transport from early and late endosomes to the trans-Golgi network (TGN). This chain is Vacuolar protein sorting-associated protein 51 homolog, found in Drosophila melanogaster (Fruit fly).